The following is a 347-amino-acid chain: Gibberellin 3-beta-dioxygenase 2 (347 aa).

The Fe2OG dioxygenase domain maps to 197–301 (DFQGTQAVIQ…RFSMAYLWGP (105 aa)). The Fe cation site is built by histidine 225, aspartate 227, and histidine 282. Residue arginine 292 is part of the active site. Arginine 292 lines the 2-oxoglutarate pocket.

It belongs to the iron/ascorbate-dependent oxidoreductase family. GA3OX subfamily. The cofactor is L-ascorbate. Fe(2+) is required as a cofactor. In terms of tissue distribution, highly expressed in seedlings but also expressed in roots, leaves, stems, flowers, siliques and seeds. Detected predominantly in the hypocotyl and roots of young seedlings and in the petioles and vasculature of leaves. Not expressed in the shoot apical meristem, but found in the elongation zone, the quiescent center cells and the columella cells of the root tips. Found in the cortex and the endodermis of the embryo axis in germinating seeds.

It carries out the reaction gibberellin A20 + 2-oxoglutarate + O2 = gibberellin A1 + succinate + CO2. It participates in plant hormone biosynthesis; gibberellin biosynthesis. In terms of biological role, converts the inactive gibberellin (GA) precursors GA9 and GA20 in the bioactives gibberellins GA4 and GA1. Involved in the production of bioactive GA for vegetative growth and development. The chain is Gibberellin 3-beta-dioxygenase 2 from Arabidopsis thaliana (Mouse-ear cress).